The chain runs to 275 residues: Hemin import ATP-binding protein HmuV (275 aa).

Residues 2 to 242 (LKAAGIGVRL…EWIETGFGLQ (241 aa)) enclose the ABC transporter domain. 34–41 (GPNGAGKS) contributes to the ATP binding site.

It belongs to the ABC transporter superfamily. Heme (hemin) importer (TC 3.A.1.14.5) family. In terms of assembly, the complex is composed of two ATP-binding proteins (HmuV), two transmembrane proteins (HmuU) and a solute-binding protein (HmuT).

The protein resides in the cell inner membrane. Functionally, part of the ABC transporter complex HmuTUV involved in hemin import. Responsible for energy coupling to the transport system. This is Hemin import ATP-binding protein HmuV from Gloeobacter violaceus (strain ATCC 29082 / PCC 7421).